We begin with the raw amino-acid sequence, 197 residues long: Imidazoleglycerol-phosphate dehydratase (197 aa).

This sequence belongs to the imidazoleglycerol-phosphate dehydratase family.

The protein localises to the cytoplasm. It carries out the reaction D-erythro-1-(imidazol-4-yl)glycerol 3-phosphate = 3-(imidazol-4-yl)-2-oxopropyl phosphate + H2O. The protein operates within amino-acid biosynthesis; L-histidine biosynthesis; L-histidine from 5-phospho-alpha-D-ribose 1-diphosphate: step 6/9. This chain is Imidazoleglycerol-phosphate dehydratase, found in Rhodopseudomonas palustris (strain BisA53).